Reading from the N-terminus, the 1193-residue chain is Structural maintenance of chromosomes protein 3 homolog (1193 aa).

31-38 (GFNGSGKS) is a binding site for ATP. N6-acetyllysine is present on Lys-101. Coiled-coil stretches lie at residues 179–286 (SKKV…LNKT) and 332–483 (ILRV…EIIK). The 127-residue stretch at 505–631 (ENILGFLIDN…VKSLESCENY (127 aa)) folds into the SMC hinge domain. A coiled-coil region spans residues 665–993 (TVYNKLKELK…SHKNIKDMIQ (329 aa)).

This sequence belongs to the SMC family. SMC3 subfamily. As to quaternary structure, component of the cohesin complex. In terms of processing, acetylation at Lys-101 by ESCO1 is important for genome stability and S phase sister chromatid cohesion.

It localises to the nucleus. In terms of biological role, central component of cohesin, a complex required for chromosome cohesion during the cell cycle. The cohesin complex may form a large proteinaceous ring within which sister chromatids can be trapped. At anaphase, the complex is cleaved and dissociates from chromatin, allowing sister chromatids to segregate. Cohesion is coupled to DNA replication and is involved in DNA repair. The cohesin complex also plays an important role in spindle pole assembly during mitosis and in chromosomes movement. This is Structural maintenance of chromosomes protein 3 homolog from Plasmodium falciparum (isolate 3D7).